The primary structure comprises 159 residues: 2-C-methyl-D-erythritol 2,4-cyclodiphosphate synthase (159 aa).

2 residues coordinate a divalent metal cation: D8 and H10. 4-CDP-2-C-methyl-D-erythritol 2-phosphate is bound by residues 8–10 (DVH) and 34–35 (HS). A divalent metal cation is bound at residue H42. 4-CDP-2-C-methyl-D-erythritol 2-phosphate contacts are provided by residues 56–58 (DIG), 132–135 (TTTE), and R142.

Belongs to the IspF family. Homotrimer. A divalent metal cation serves as cofactor.

It catalyses the reaction 4-CDP-2-C-methyl-D-erythritol 2-phosphate = 2-C-methyl-D-erythritol 2,4-cyclic diphosphate + CMP. It functions in the pathway isoprenoid biosynthesis; isopentenyl diphosphate biosynthesis via DXP pathway; isopentenyl diphosphate from 1-deoxy-D-xylulose 5-phosphate: step 4/6. In terms of biological role, involved in the biosynthesis of isopentenyl diphosphate (IPP) and dimethylallyl diphosphate (DMAPP), two major building blocks of isoprenoid compounds. Catalyzes the conversion of 4-diphosphocytidyl-2-C-methyl-D-erythritol 2-phosphate (CDP-ME2P) to 2-C-methyl-D-erythritol 2,4-cyclodiphosphate (ME-CPP) with a corresponding release of cytidine 5-monophosphate (CMP). The polypeptide is 2-C-methyl-D-erythritol 2,4-cyclodiphosphate synthase (Chlorobium phaeobacteroides (strain BS1)).